The following is a 225-amino-acid chain: NAD(P)H-quinone oxidoreductase subunit K, chloroplastic (225 aa).

4 residues coordinate [4Fe-4S] cluster: Cys-43, Cys-44, Cys-108, and Cys-139.

The protein belongs to the complex I 20 kDa subunit family. As to quaternary structure, NDH is composed of at least 16 different subunits, 5 of which are encoded in the nucleus. [4Fe-4S] cluster serves as cofactor.

It localises to the plastid. The protein resides in the chloroplast thylakoid membrane. The enzyme catalyses a plastoquinone + NADH + (n+1) H(+)(in) = a plastoquinol + NAD(+) + n H(+)(out). It carries out the reaction a plastoquinone + NADPH + (n+1) H(+)(in) = a plastoquinol + NADP(+) + n H(+)(out). In terms of biological role, NDH shuttles electrons from NAD(P)H:plastoquinone, via FMN and iron-sulfur (Fe-S) centers, to quinones in the photosynthetic chain and possibly in a chloroplast respiratory chain. The immediate electron acceptor for the enzyme in this species is believed to be plastoquinone. Couples the redox reaction to proton translocation, and thus conserves the redox energy in a proton gradient. In Populus alba (White poplar), this protein is NAD(P)H-quinone oxidoreductase subunit K, chloroplastic.